The chain runs to 730 residues: GTPase-activating protein GYP7 (730 aa).

The 186-residue stretch at 434-619 (VQEDKERDDF…RLWEVLWTDY (186 aa)) folds into the Rab-GAP TBC domain.

Functionally, most effectively accelerate the intrinsic GTPase activity of YPT7. It is also active, but to a lesser extent, on YPT31, YPT32 and YPT1. YPT6 and SEC4. The polypeptide is GTPase-activating protein GYP7 (GYP7) (Yarrowia lipolytica (strain CLIB 122 / E 150) (Yeast)).